Here is a 361-residue protein sequence, read N- to C-terminus: tRNA/tmRNA (uracil-C(5))-methyltransferase (361 aa).

Positions 183, 211, 216, 232, and 294 each coordinate S-adenosyl-L-methionine. Cys319 acts as the Nucleophile in catalysis. Residue Glu353 is the Proton acceptor of the active site.

This sequence belongs to the class I-like SAM-binding methyltransferase superfamily. RNA M5U methyltransferase family. TrmA subfamily.

The enzyme catalyses uridine(54) in tRNA + S-adenosyl-L-methionine = 5-methyluridine(54) in tRNA + S-adenosyl-L-homocysteine + H(+). It carries out the reaction uridine(341) in tmRNA + S-adenosyl-L-methionine = 5-methyluridine(341) in tmRNA + S-adenosyl-L-homocysteine + H(+). Its function is as follows. Dual-specificity methyltransferase that catalyzes the formation of 5-methyluridine at position 54 (m5U54) in all tRNAs, and that of position 341 (m5U341) in tmRNA (transfer-mRNA). This is tRNA/tmRNA (uracil-C(5))-methyltransferase from Acinetobacter baylyi (strain ATCC 33305 / BD413 / ADP1).